The primary structure comprises 370 residues: 3-isopropylmalate dehydrogenase (370 aa).

Residue 77 to 90 (GPKWDSVPYEVRPE) participates in NAD(+) binding. The substrate site is built by arginine 97, arginine 107, arginine 135, and aspartate 226. Residues aspartate 226, aspartate 250, and aspartate 254 each coordinate Mg(2+). 290 to 302 (GSAPDIAGKGIAN) lines the NAD(+) pocket.

Belongs to the isocitrate and isopropylmalate dehydrogenases family. LeuB type 1 subfamily. As to quaternary structure, homodimer. Mg(2+) is required as a cofactor. Requires Mn(2+) as cofactor.

The protein resides in the cytoplasm. It catalyses the reaction (2R,3S)-3-isopropylmalate + NAD(+) = 4-methyl-2-oxopentanoate + CO2 + NADH. Its pathway is amino-acid biosynthesis; L-leucine biosynthesis; L-leucine from 3-methyl-2-oxobutanoate: step 3/4. Catalyzes the oxidation of 3-carboxy-2-hydroxy-4-methylpentanoate (3-isopropylmalate) to 3-carboxy-4-methyl-2-oxopentanoate. The product decarboxylates to 4-methyl-2 oxopentanoate. This Brucella abortus (strain 2308) protein is 3-isopropylmalate dehydrogenase.